The sequence spans 187 residues: Probable carboxylesterase Culp7 (187 aa).

Cysteines 15 and 69 form a disulfide. Catalysis depends on serine 80, which acts as the Nucleophile. A disulfide bond links cysteine 151 and cysteine 158. Residue aspartate 155 is part of the active site. The active-site Proton donor/acceptor is the histidine 167.

It belongs to the cutinase family.

The protein resides in the cytoplasm. It localises to the cell membrane. It is found in the secreted. The protein localises to the cell wall. Functionally, may have a role in cell wall processes. Does not exhibit cutinase activity. The protein is Probable carboxylesterase Culp7 of Mycobacterium tuberculosis (strain ATCC 25618 / H37Rv).